A 409-amino-acid chain; its full sequence is Arginine deiminase (409 aa).

Cys399 (amidino-cysteine intermediate) is an active-site residue.

This sequence belongs to the arginine deiminase family.

Its subcellular location is the cytoplasm. It catalyses the reaction L-arginine + H2O = L-citrulline + NH4(+). The protein operates within amino-acid degradation; L-arginine degradation via ADI pathway; carbamoyl phosphate from L-arginine: step 1/2. In Borreliella afzelii (strain PKo) (Borrelia afzelii), this protein is Arginine deiminase.